Reading from the N-terminus, the 313-residue chain is Serine/threonine-protein kinase SZE1 (313 aa).

Glycine 2 is lipidated: N-myristoyl glycine. The Protein kinase domain maps to methionine 43–alanine 311. Residues leucine 49–leucine 57 and lysine 71 contribute to the ATP site.

Belongs to the protein kinase superfamily. Ser/Thr protein kinase family. In terms of assembly, component of an immune signaling complex made of, at least, SZE1, BKN2/SZE2, ZAR1 and ZED1. Interacts directly with ZED1, ZAR1 and Pseudomonas syringae HOPZ1A at the plasma membrane. Post-translationally, N-terminal myristoylation is critical for plasma membrane localization and implication in defense responses. Autophosphorylated. As to expression, expressed in roots, seedlings, rosette leaves, floral organs, siliques and inflorescence stems.

The protein resides in the cell membrane. The enzyme catalyses L-seryl-[protein] + ATP = O-phospho-L-seryl-[protein] + ADP + H(+). The catalysed reaction is L-threonyl-[protein] + ATP = O-phospho-L-threonyl-[protein] + ADP + H(+). In terms of biological role, together with BKN2/SZE2 and ZED1, required for effector-triggered immunity (e.g. Pseudomonas syringae effector type III HopZ1a) via the activation of ZAR1, thus being essential for resistance against P.syringae pv. tomato DC3000 expressing HopZ1a. This Arabidopsis thaliana (Mouse-ear cress) protein is Serine/threonine-protein kinase SZE1.